The following is a 330-amino-acid chain: Ketol-acid reductoisomerase (NADP(+)) (330 aa).

The KARI N-terminal Rossmann domain occupies Leu-3–Thr-184. NADP(+) contacts are provided by residues Tyr-26–Gln-29, Ser-52, and Ser-54. His-109 is an active-site residue. NADP(+) is bound at residue Gly-135. The KARI C-terminal knotted domain maps to Ser-185–Glu-329. Mg(2+)-binding residues include Asp-193, Glu-197, Glu-229, and Glu-233. Ser-254 contributes to the substrate binding site.

The protein belongs to the ketol-acid reductoisomerase family. Mg(2+) serves as cofactor.

It catalyses the reaction (2R)-2,3-dihydroxy-3-methylbutanoate + NADP(+) = (2S)-2-acetolactate + NADPH + H(+). It carries out the reaction (2R,3R)-2,3-dihydroxy-3-methylpentanoate + NADP(+) = (S)-2-ethyl-2-hydroxy-3-oxobutanoate + NADPH + H(+). It functions in the pathway amino-acid biosynthesis; L-isoleucine biosynthesis; L-isoleucine from 2-oxobutanoate: step 2/4. It participates in amino-acid biosynthesis; L-valine biosynthesis; L-valine from pyruvate: step 2/4. Functionally, involved in the biosynthesis of branched-chain amino acids (BCAA). Catalyzes an alkyl-migration followed by a ketol-acid reduction of (S)-2-acetolactate (S2AL) to yield (R)-2,3-dihydroxy-isovalerate. In the isomerase reaction, S2AL is rearranged via a Mg-dependent methyl migration to produce 3-hydroxy-3-methyl-2-ketobutyrate (HMKB). In the reductase reaction, this 2-ketoacid undergoes a metal-dependent reduction by NADPH to yield (R)-2,3-dihydroxy-isovalerate. This chain is Ketol-acid reductoisomerase (NADP(+)), found in Helicobacter acinonychis (strain Sheeba).